An 876-amino-acid polypeptide reads, in one-letter code: Probable inactive ATP-dependent zinc metalloprotease FTSHI 2, chloroplastic (876 aa).

The tract at residues methionine 1 to asparagine 20 is disordered. Residues methionine 1–serine 32 constitute a chloroplast transit peptide. Polar residues predominate over residues histidine 8 to glutamate 19. The helical transmembrane segment at leucine 59–alanine 79 threads the bilayer. Residues threonine 256–lysine 276 form a disordered region. The span at lysine 258–lysine 275 shows a compositional bias: basic residues. Residues valine 304 to tyrosine 324 form a helical membrane-spanning segment. Positions glutamate 350–glycine 370 are disordered. Acidic residues predominate over residues glycine 357–glycine 368. Glycine 450 to threonine 457 is an ATP binding site.

It in the N-terminal section; belongs to the AAA ATPase family. The protein in the C-terminal section; belongs to the peptidase M41 family. Homooligomer. Interacts with FtsHi4.

The protein resides in the plastid. The protein localises to the chloroplast membrane. Its function is as follows. Required for plastid development during embryogenesis. Might be involved in chaperone functions or play a structural role in the thylakoid FtsH complex. In Arabidopsis thaliana (Mouse-ear cress), this protein is Probable inactive ATP-dependent zinc metalloprotease FTSHI 2, chloroplastic.